Here is a 2892-residue protein sequence, read N- to C-terminus: E3 ubiquitin-protein ligase lubel (2892 aa).

Disordered regions lie at residues 23–55 (DRIG…KSTP), 125–252 (KQHM…QLEK), 395–423 (SQQH…QFGS), 483–631 (PSAA…ESEG), 644–672 (QKLQ…ENTQ), 685–737 (AHEE…PDHE), 757–865 (CCKT…DNSL), and 949–975 (DRFT…QQES). The span at 40-52 (GLPKAPALPPKAK) shows a compositional bias: low complexity. A compositionally biased stretch (gly residues) spans 189-198 (GWRGSLGGGA). Over residues 206–215 (ATSSANQMNN) the composition is skewed to polar residues. 2 stretches are compositionally biased toward low complexity: residues 402 to 412 (AQHPHQALPQH) and 483 to 503 (PSAA…TPSR). A compositionally biased stretch (acidic residues) spans 516-528 (VDDELTDDEDSDQ). The span at 535–546 (VSNRSGMTSASR) shows a compositional bias: polar residues. Positions 547-560 (SQHHQNHIQPRQRR) are enriched in basic residues. Residues 606-623 (GTLTRNKTATDSARTSRI) are compositionally biased toward polar residues. The span at 647 to 670 (QEADQHKSSKKAEPKRKPEMKDEN) shows a compositional bias: basic and acidic residues. Residues 801–813 (KPTTKSQQPSQKS) show a composition bias toward polar residues. Low complexity-rich tracts occupy residues 818–837 (SKTT…AVNS) and 846–856 (KTPSKSTLKTS). Residues 1042–1187 (MHIILKELEL…LMRIWGSPNG (146 aa)) form the UBA-like 1 domain. Disordered stretches follow at residues 1214 to 1252 (LQPP…SPYQ), 1477 to 1520 (LPTA…KLET), 1557 to 1653 (AEVQ…KILS), 1717 to 2019 (STTI…NLSE), 2032 to 2082 (RDEI…EGNT), 2191 to 2316 (SAPP…PLRS), and 2411 to 2431 (DYET…EPQK). Polar residues predominate over residues 1241–1252 (VKSTYATPSPYQ). Residues 1510-1519 (EELRQQEKLE) show a composition bias toward basic and acidic residues. Polar residues predominate over residues 1560 to 1571 (QVQSDDQPSTSR). Over residues 1576–1587 (RAKRSQQSRKGR) the composition is skewed to basic residues. Polar residues predominate over residues 1595-1607 (PTNRTKLPNNIDQ). Residues 1608 to 1627 (KVNESKTAAKETEAVKDKDL) are compositionally biased toward basic and acidic residues. Polar residues-rich tracts occupy residues 1630-1653 (AASN…KILS), 1717-1726 (STTISEQSEG), and 1764-1779 (KSPT…TSHI). Residues 1822-1834 (LSSSSLRSESRSS) are compositionally biased toward low complexity. Residues 1859–1881 (TVSSPKSEQLSDNQEVNLVSQET) are compositionally biased toward polar residues. The segment covering 1918–1927 (DSDEVFEDAP) has biased composition (acidic residues). The span at 1953-1963 (DGQRAETKSPE) shows a compositional bias: basic and acidic residues. Composition is skewed to acidic residues over residues 1964 to 1975 (DEVVILLDEESQ) and 2036 to 2079 (SMDE…DGEE). Low complexity-rich tracts occupy residues 2214–2230 (PSEV…ALPI) and 2269–2291 (SGTA…TVSK). Residues 2297-2308 (NEPTNKSNSTPL) are compositionally biased toward polar residues. Residues 2411-2425 (DYETSATEEEQEEPN) show a composition bias toward acidic residues. One can recognise a UBA-like 2 domain in the interval 2457-2513 (DPAILARKYVDQELVTNIAEAQIAATLVSMKFSEDVALWAARECSDLDQAIAMLQQE). The interval 2510-2748 (LQQECELCMN…LGLHAHHPRN (239 aa)) is TRIAD supradomain. C2514, C2517, C2537, C2540, C2618, C2621, C2636, C2639, C2644, C2647, H2655, C2660, C2690, and C2693 together coordinate Zn(2+). Residues 2514–2564 (CELCMNSYPMNQMVSMLKCLHKCCKQCAKSYFTVQITDRSINDCSCPFCKL) form an RING-type 1 zinc finger. The tract at residues 2514–2892 (CELCMNSYPM…IKKHIPLKSA (379 aa)) is necessary for linear polyubiquitination and sufficent for inducing DptA in the intestine. Residues 2601–2660 (QRKLRDRSLLQDPNFKWCIQCSSGFFARPKQKRLICPDCGSVTCAQCRKPWERQHEGSSC) form an IBR-type zinc finger. The RING-type 2; atypical zinc-finger motif lies at 2690-2720 (CPKCKFRYSLARGGCMHFTCTQCKFEFCYGC). C2704 is a catalytic residue. Residues C2709 and C2712 each coordinate Zn(2+).

Belongs to the RBR family.

It catalyses the reaction [E2 ubiquitin-conjugating enzyme]-S-ubiquitinyl-L-cysteine + [acceptor protein]-L-lysine = [E2 ubiquitin-conjugating enzyme]-L-cysteine + [acceptor protein]-N(6)-ubiquitinyl-L-lysine.. In terms of biological role, E3 ubiquitin-protein ligase which conjugates linear 'Met-1'- and 'Lys-63'-linked polyubiquitin chains to substrates and plays a crucial role in the NF-kappa-B intestinal inflammatory response to oral infection and in the heat stress response. Preferentially interacts with 'Lys-63'-linked, and to a lesser extent 'Lys-48'-linked, polyubiquitin chains. Upon oral infection with a Gram-negative bacterium E.carotovora subsp. carotovora 15, functions with the E2 ubiquitin-conjugating enzyme Ubc10 to mediate the conjugation of 'Lys-63'- and linear 'Met-1'-linked polyubiquitin chains to the substrate key which is essential for activation of the NF-kappa-B signaling cascade in the adult intestinal epithelium. It is not required for systemic immune response to septic infection with either E.carotovora subsp. carotovora 15 or Gram-positive M.luteus bacteria. Function in controlling linear ubiquitination is also essential for regulating the heat stress response in adults. This function may require the E2 ubiquitin-conjugating enzymes Ubc10 or eff. The sequence is that of E3 ubiquitin-protein ligase lubel from Drosophila melanogaster (Fruit fly).